A 190-amino-acid polypeptide reads, in one-letter code: Shikimate kinase (190 aa).

13 to 18 (GAGKTT) contributes to the ATP binding site. Residue threonine 17 participates in Mg(2+) binding. 3 residues coordinate substrate: aspartate 35, arginine 59, and glycine 81. Arginine 119 serves as a coordination point for ATP. Position 138 (arginine 138) interacts with substrate.

This sequence belongs to the shikimate kinase family. Monomer. The cofactor is Mg(2+).

Its subcellular location is the cytoplasm. It carries out the reaction shikimate + ATP = 3-phosphoshikimate + ADP + H(+). The protein operates within metabolic intermediate biosynthesis; chorismate biosynthesis; chorismate from D-erythrose 4-phosphate and phosphoenolpyruvate: step 5/7. Its function is as follows. Catalyzes the specific phosphorylation of the 3-hydroxyl group of shikimic acid using ATP as a cosubstrate. The polypeptide is Shikimate kinase (Ralstonia nicotianae (strain ATCC BAA-1114 / GMI1000) (Ralstonia solanacearum)).